Here is a 496-residue protein sequence, read N- to C-terminus: Cobyric acid synthase (496 aa).

The GATase cobBQ-type domain maps to 264-458 (HTRIAVVAYP…LHGLFEDAAV (195 aa)). The Nucleophile role is filled by Cys-345. His-450 is a catalytic residue.

This sequence belongs to the CobB/CobQ family. CobQ subfamily.

The protein operates within cofactor biosynthesis; adenosylcobalamin biosynthesis. Functionally, catalyzes amidations at positions B, D, E, and G on adenosylcobyrinic A,C-diamide. NH(2) groups are provided by glutamine, and one molecule of ATP is hydrogenolyzed for each amidation. The protein is Cobyric acid synthase of Acidovorax ebreus (strain TPSY) (Diaphorobacter sp. (strain TPSY)).